Here is a 599-residue protein sequence, read N- to C-terminus: Translation initiation factor IF-2 (599 aa).

The tr-type G domain occupies Pro-111–Glu-278. Positions Gly-120–Thr-127 are G1. Position 120–127 (Gly-120–Thr-127) interacts with GTP. Positions Gly-145 to His-149 are G2. Residues Asp-166–Gly-169 form a G3 region. GTP-binding positions include Asp-166–His-170 and Asn-220–Asp-223. The tract at residues Asn-220–Asp-223 is G4. Residues Ser-256–Leu-258 are G5.

The protein belongs to the TRAFAC class translation factor GTPase superfamily. Classic translation factor GTPase family. IF-2 subfamily.

It localises to the cytoplasm. In terms of biological role, one of the essential components for the initiation of protein synthesis. Protects formylmethionyl-tRNA from spontaneous hydrolysis and promotes its binding to the 30S ribosomal subunits. Also involved in the hydrolysis of GTP during the formation of the 70S ribosomal complex. This Mesomycoplasma hyopneumoniae (strain 232) (Mycoplasma hyopneumoniae) protein is Translation initiation factor IF-2.